We begin with the raw amino-acid sequence, 74 residues long: Small ribosomal subunit protein uS15 (74 aa).

Belongs to the universal ribosomal protein uS15 family. Part of the 30S ribosomal subunit. Forms a bridge to the 50S subunit in the 70S ribosome, contacting the 23S rRNA.

One of the primary rRNA binding proteins, it binds directly to 16S rRNA where it helps nucleate assembly of the platform of the 30S subunit by binding and bridging several RNA helices of the 16S rRNA. Functionally, forms an intersubunit bridge (bridge B4) with the 23S rRNA of the 50S subunit in the ribosome. This Onion yellows phytoplasma (strain OY-M) protein is Small ribosomal subunit protein uS15.